The sequence spans 3856 residues: Hybrid PKS-NRPS synthetase traA (3856 aa).

The Ketosynthase family 3 (KS3) domain occupies 6 to 438 (PEPIAIVGSG…GTNGHAILEE (433 aa)). Active-site for beta-ketoacyl synthase activity residues include cysteine 179, histidine 318, and histidine 358. The interval 554–885 (IFTGQGAQWA…FSDALGFVWT (332 aa)) is malonyl-CoA:ACP transacylase (MAT) domain. Residues 943-1081 (HELLGVPSPN…GKVTVIYGTP (139 aa)) are N-terminal hotdog fold. The interval 943–1247 (HELLGVPSPN…LSMKPFSPAT (305 aa)) is dehydratase (DH) domain. Residues 943–1249 (HELLGVPSPN…MKPFSPATAD (307 aa)) enclose the PKS/mFAS DH domain. Histidine 975 serves as the catalytic Proton acceptor; for dehydratase activity. The segment at 1096–1249 (MVDIQAEQFY…MKPFSPATAD (154 aa)) is C-terminal hotdog fold. The Proton donor; for dehydratase activity role is filled by aspartate 1156. Residues 1290 to 1456 (LACVAQQIVH…RKAGFSGIDS (167 aa)) form a methyltransferase (MT) domain region. The interval 1984–2158 (TYVLVGLSGR…ATSLDIGSIV (175 aa)) is ketoreductase (KR) domain. Positions 2266–2347 (ADALEILKEL…TLCQQALEKL (82 aa)) constitute a Carrier 1 domain. An O-(pantetheine 4'-phosphoryl)serine modification is found at serine 2307. The disordered stretch occupies residues 2351–2422 (ILPNVESGGP…SSTPATVLSN (72 aa)). Composition is skewed to low complexity over residues 2357–2369 (SGGP…SKPT) and 2399–2418 (TTSP…TPAT). The tract at residues 2446–2884 (VKTELVSFQQ…FALFSDKELK (439 aa)) is condensation (C) domain. Residues 2910–3310 (QIAKENDDKV…GAMVFHNRIA (401 aa)) are adenylation (A) domain. The interval 3403-3429 (SKTDRKALKELPLPQRSNHDTGDNTES) is disordered. The Carrier 2 domain occupies 3428–3507 (ESLTETMLEL…DMTQKIEESL (80 aa)). Position 3467 is an O-(pantetheine 4'-phosphoryl)serine (serine 3467). Positions 3544–3768 (VTGSGGFLGK…EMTPIHSAAS (225 aa)) are reductase (R) domain.

The protein in the C-terminal section; belongs to the NRP synthetase family.

The protein operates within secondary metabolite biosynthesis. Functionally, hybrid PKS-NRPS synthetase; part of the tra gene cluster that produces terrestric acid. The clavatol biosynthesis cluster cla and the terrestric acid cluster tra are both involved in the production of peniphenones and penilactones. The non-reducing PKS claF is responsible for the formation of clavatol from successive condensations of 3 malonyl-CoA units, presumably with a simple acetyl-CoA starter unit, and 2 methylation steps. The esterase claE probably collaborates with claF by catalyzing the hydrolysis of ACP-bound acyl intermediates to free the ACP from stalled intermediates. The clavatol oxidase claD then converts clavatol to hydroxyclavatol. Spontaneous dehydration of hydroxyclavatol leads to the accumulation of the highly active ortho-quinone methide. On the other hand, the PKS-NRPS hybrid traA is involved in the formation of crustosic acid, with the help of traB and traD. The polyketide synthase module (PKS) of traA is responsible for the synthesis of the polyketide backbone via the condensation of an acetyl-CoA starter unit with 3 malonyl-CoA units. The downstream nonribosomal peptide synthetase (NRPS) module then amidates the carboxyl end of the polyketide with L-malic acid. Because traA lacks a designated enoylreductase (ER) domain, the required activity is provided the enoyl reductase traG. Crustosic acid undergoes decarboxylation and isomerization to the terrestric acid, catalyzed by the 2-oxoglutarate-dependent dioxygenase traH. Both acids are further converted to the 2 gamma-butyrolactones (R)-5-methyltetronic acid and (S)-5-carboxylmethyltetronic acid, with involvement of the cytochrome P450 monooxygenase claJ. Spontaneous addition of the methide to these gamma-butyrolactones leads to peniphenone D and penilactone D, which undergo again stereospecific attacking by methide to give penilactones A and B. The protein is Hybrid PKS-NRPS synthetase traA of Penicillium crustosum (Blue mold fungus).